Here is a 682-residue protein sequence, read N- to C-terminus: DNA-directed RNA polymerase subunit beta' (682 aa).

Zn(2+) contacts are provided by Cys-69, Cys-71, Cys-87, and Cys-90. Mg(2+) is bound by residues Asp-489, Asp-491, and Asp-493.

It belongs to the RNA polymerase beta' chain family. RpoC1 subfamily. As to quaternary structure, in plastids the minimal PEP RNA polymerase catalytic core is composed of four subunits: alpha, beta, beta', and beta''. When a (nuclear-encoded) sigma factor is associated with the core the holoenzyme is formed, which can initiate transcription. Mg(2+) is required as a cofactor. Requires Zn(2+) as cofactor.

It localises to the plastid. The protein localises to the chloroplast. It carries out the reaction RNA(n) + a ribonucleoside 5'-triphosphate = RNA(n+1) + diphosphate. Functionally, DNA-dependent RNA polymerase catalyzes the transcription of DNA into RNA using the four ribonucleoside triphosphates as substrates. The sequence is that of DNA-directed RNA polymerase subunit beta' from Vitis vinifera (Grape).